The sequence spans 400 residues: uncharacterized protein (400 aa).

Residues 161–380 (NDLLNIIDIV…YVVKVIVMRL (220 aa)) enclose the TR mART core domain.

This is an uncharacterized protein from Acanthamoeba polyphaga (Amoeba).